We begin with the raw amino-acid sequence, 306 residues long: Pseudouridine-5'-phosphate glycosidase (306 aa).

Glu-27 (proton donor) is an active-site residue. Substrate is bound by residues Lys-88 and Val-108. Asp-140 provides a ligand contact to Mn(2+). 142-144 is a binding site for substrate; the sequence is SAD. The active-site Nucleophile is the Lys-161.

Belongs to the pseudouridine-5'-phosphate glycosidase family. Homotrimer. It depends on Mn(2+) as a cofactor.

The enzyme catalyses D-ribose 5-phosphate + uracil = psi-UMP + H2O. In terms of biological role, catalyzes the reversible cleavage of pseudouridine 5'-phosphate (PsiMP) to ribose 5-phosphate and uracil. Functions biologically in the cleavage direction, as part of a pseudouridine degradation pathway. This is Pseudouridine-5'-phosphate glycosidase from Petrotoga mobilis (strain DSM 10674 / SJ95).